We begin with the raw amino-acid sequence, 894 residues long: Pentatricopeptide repeat-containing protein At1g19720 (894 aa).

PPR repeat units lie at residues 80 to 110 (KRST…FGLF), 114 to 144 (DVFV…MRER), 145 to 179 (NLFT…GVLP), 180 to 214 (DDFL…GMSS), 215 to 245 (CLRV…MRER), 246 to 280 (DVIA…GISP), 281 to 315 (GLVT…GITA), 316 to 350 (DVFT…GVVP), 351 to 385 (NAVT…GFID), 386 to 416 (DVLV…VKNK), 417 to 451 (DVYT…NLRP), 452 to 486 (NIIT…GKVQ), 488 to 522 (NTAT…RFMP), 523 to 557 (NSVT…NLDA), 558 to 588 (IHAV…METK), 589 to 623 (DIIT…GITP), 624 to 659 (NRGT…HIIP), and 660 to 694 (ALEH…SETP). The tract at residues 695 to 770 (IWESFLTGCR…PLGQSWIEVR (76 aa)) is type E motif. A type E(+) motif region spans residues 771–801 (NLIHTFTTGDQSKLCTDVLYPLVEKMSRLDN). The tract at residues 803-894 (SDQYNGELWI…NGDCSCKDYW (92 aa)) is type DYW motif.

It belongs to the PPR family. PCMP-H subfamily.

This chain is Pentatricopeptide repeat-containing protein At1g19720 (DYW7), found in Arabidopsis thaliana (Mouse-ear cress).